The primary structure comprises 880 residues: Valine--tRNA ligase (880 aa).

The 'HIGH' region signature appears at 47–57 (PNITGKLHLGH). The short motif at 526–530 (KMSKS) is the 'KMSKS' region element. Lysine 529 contributes to the ATP binding site. Positions 810-845 (LLDLVDREKELERLNKEKTKLEGEILRVEKKLSNER) form a coiled coil.

The protein belongs to the class-I aminoacyl-tRNA synthetase family. ValS type 1 subfamily. In terms of assembly, monomer.

The protein resides in the cytoplasm. It carries out the reaction tRNA(Val) + L-valine + ATP = L-valyl-tRNA(Val) + AMP + diphosphate. In terms of biological role, catalyzes the attachment of valine to tRNA(Val). As ValRS can inadvertently accommodate and process structurally similar amino acids such as threonine, to avoid such errors, it has a 'posttransfer' editing activity that hydrolyzes mischarged Thr-tRNA(Val) in a tRNA-dependent manner. The chain is Valine--tRNA ligase from Clostridium perfringens (strain 13 / Type A).